The following is a 520-amino-acid chain: GMP synthase [glutamine-hydrolyzing] (520 aa).

A Glutamine amidotransferase type-1 domain is found at 9–202 (SVLIVDFGSQ…IHNIAGIKGD (194 aa)). The active-site Nucleophile is C86. Active-site residues include H176 and E178. The GMPS ATP-PPase domain maps to 203 to 395 (WSMSAYRQKA…LGLPDSFIGR (193 aa)). An ATP-binding site is contributed by 230-236 (SGGVDSS).

As to quaternary structure, homodimer.

The enzyme catalyses XMP + L-glutamine + ATP + H2O = GMP + L-glutamate + AMP + diphosphate + 2 H(+). It participates in purine metabolism; GMP biosynthesis; GMP from XMP (L-Gln route): step 1/1. In terms of biological role, catalyzes the synthesis of GMP from XMP. This Rhizobium etli (strain CIAT 652) protein is GMP synthase [glutamine-hydrolyzing].